Here is a 550-residue protein sequence, read N- to C-terminus: CTP synthase (550 aa).

Residues Met-1–Leu-267 form an amidoligase domain region. A CTP-binding site is contributed by Ser-14. UTP is bound at residue Ser-14. ATP is bound by residues Ser-15–Leu-20 and Asp-72. Asp-72 and Glu-141 together coordinate Mg(2+). Residues Asp-148–Glu-150, Lys-188–Gln-193, and Lys-224 each bind CTP. UTP is bound by residues Lys-188–Gln-193 and Lys-224. The region spanning Thr-292–Gly-545 is the Glutamine amidotransferase type-1 domain. Gly-354 is a binding site for L-glutamine. Cys-381 serves as the catalytic Nucleophile; for glutamine hydrolysis. L-glutamine-binding positions include Leu-382–Gln-385, Glu-405, and Arg-473. Active-site residues include His-518 and Glu-520.

The protein belongs to the CTP synthase family. Homotetramer.

It carries out the reaction UTP + L-glutamine + ATP + H2O = CTP + L-glutamate + ADP + phosphate + 2 H(+). The catalysed reaction is L-glutamine + H2O = L-glutamate + NH4(+). The enzyme catalyses UTP + NH4(+) + ATP = CTP + ADP + phosphate + 2 H(+). It participates in pyrimidine metabolism; CTP biosynthesis via de novo pathway; CTP from UDP: step 2/2. Allosterically activated by GTP, when glutamine is the substrate; GTP has no effect on the reaction when ammonia is the substrate. The allosteric effector GTP functions by stabilizing the protein conformation that binds the tetrahedral intermediate(s) formed during glutamine hydrolysis. Inhibited by the product CTP, via allosteric rather than competitive inhibition. Functionally, catalyzes the ATP-dependent amination of UTP to CTP with either L-glutamine or ammonia as the source of nitrogen. Regulates intracellular CTP levels through interactions with the four ribonucleotide triphosphates. The sequence is that of CTP synthase from Nitratidesulfovibrio vulgaris (strain DSM 19637 / Miyazaki F) (Desulfovibrio vulgaris).